A 343-amino-acid chain; its full sequence is Fructose-1,6-bisphosphatase, cytosolic (343 aa).

Mg(2+) is bound by residues Glu71, Glu100, Asp121, Leu123, and Asp124. Substrate-binding positions include 124-127, Asn215, Tyr247, Tyr267, and Lys277; that span reads DGSS. Residue Glu283 participates in Mg(2+) binding.

Belongs to the FBPase class 1 family. It depends on Mg(2+) as a cofactor.

The protein resides in the cytoplasm. The enzyme catalyses beta-D-fructose 1,6-bisphosphate + H2O = beta-D-fructose 6-phosphate + phosphate. The sequence is that of Fructose-1,6-bisphosphatase, cytosolic (CFBP) from Saccharum hybrid (Sugarcane).